The primary structure comprises 247 residues: PF03932 family protein CutC (247 aa).

Belongs to the CutC family.

It is found in the cytoplasm. The polypeptide is PF03932 family protein CutC (Vibrio campbellii (strain ATCC BAA-1116)).